Consider the following 1267-residue polypeptide: DNA-directed RNA polymerase subunit beta'' (1267 aa).

Zn(2+)-binding residues include Cys-222, Cys-290, Cys-297, and Cys-300.

The protein belongs to the RNA polymerase beta' chain family. RpoC2 subfamily. In terms of assembly, in plastids the minimal PEP RNA polymerase catalytic core is composed of four subunits: alpha, beta, beta', and beta''. When a (nuclear-encoded) sigma factor is associated with the core the holoenzyme is formed, which can initiate transcription. Zn(2+) is required as a cofactor.

It is found in the plastid. Its subcellular location is the chloroplast. It catalyses the reaction RNA(n) + a ribonucleoside 5'-triphosphate = RNA(n+1) + diphosphate. Its function is as follows. DNA-dependent RNA polymerase catalyzes the transcription of DNA into RNA using the four ribonucleoside triphosphates as substrates. This Emiliania huxleyi (Coccolithophore) protein is DNA-directed RNA polymerase subunit beta''.